A 384-amino-acid polypeptide reads, in one-letter code: Putative 8-amino-7-oxononanoate synthase (384 aa).

Arg-18 lines the substrate pocket. A pyridoxal 5'-phosphate-binding site is contributed by 105-106 (GY). Substrate is bound at residue His-130. Pyridoxal 5'-phosphate-binding positions include Ser-176, 201–204 (DDAH), and 233–236 (TLSK). Position 236 is an N6-(pyridoxal phosphate)lysine (Lys-236). A substrate-binding site is contributed by Thr-349.

The protein belongs to the class-II pyridoxal-phosphate-dependent aminotransferase family. BioF subfamily. Homodimer. The cofactor is pyridoxal 5'-phosphate.

The catalysed reaction is 6-carboxyhexanoyl-[ACP] + L-alanine + H(+) = (8S)-8-amino-7-oxononanoate + holo-[ACP] + CO2. The protein operates within cofactor biosynthesis; biotin biosynthesis. Functionally, catalyzes the decarboxylative condensation of pimeloyl-[acyl-carrier protein] and L-alanine to produce 8-amino-7-oxononanoate (AON), [acyl-carrier protein], and carbon dioxide. The polypeptide is Putative 8-amino-7-oxononanoate synthase (bioF) (Desulfovibrio desulfuricans (strain ATCC 27774 / DSM 6949 / MB)).